A 26-amino-acid chain; its full sequence is Small toxic protein ShoB (26 aa).

The helical transmembrane segment at 7–24 (LIKRVIKIIIAVLQLILL) threads the bilayer.

It is found in the membrane. In terms of biological role, toxic component of a type I toxin-antitoxin (TA) system. May be a toxic protein; overexpression causes cessation of growth and rapid membrane depolarization. Overexpression induces stress-response and a number of membrane protein genes. The polypeptide is Small toxic protein ShoB (shoB) (Escherichia coli (strain K12)).